The chain runs to 232 residues: Large ribosomal subunit protein uL1 (232 aa).

It belongs to the universal ribosomal protein uL1 family. In terms of assembly, part of the 50S ribosomal subunit.

Binds directly to 23S rRNA. The L1 stalk is quite mobile in the ribosome, and is involved in E site tRNA release. In terms of biological role, protein L1 is also a translational repressor protein, it controls the translation of the L11 operon by binding to its mRNA. This is Large ribosomal subunit protein uL1 from Paraburkholderia phymatum (strain DSM 17167 / CIP 108236 / LMG 21445 / STM815) (Burkholderia phymatum).